The following is a 626-amino-acid chain: Miltiradiene synthase KSL1, chloroplastic (626 aa).

The transit peptide at 1 to 51 (MSLAFNLRVIPFSGHTIQSRRGLFPVHESPMITTKPFAAVKCSLTTSTDLM) directs the protein to the chloroplast. Mg(2+) contacts are provided by Asp-329, Asp-333, Asn-473, and Glu-481. A DDXXD motif motif is present at residues 329–333 (DDFFD).

Belongs to the terpene synthase family. Mg(2+) is required as a cofactor. As to expression, highly expressed in roots, and, at low levels, in stems and leaves.

It localises to the plastid. The protein localises to the chloroplast. It catalyses the reaction (+)-copalyl diphosphate = miltiradiene + diphosphate. Its pathway is secondary metabolite biosynthesis; terpenoid biosynthesis. Involved in the biosynthesis of ent-kaurene diterpenoids natural products such as oridonin, miltiradiene, eriocalyxin B and nezukol, known to exhibit antitumor, anti-inflammatory and antibacterial activities. Catalyzes the conversion of (+)-copalyl diphosphate ((+)-CPP) to miltiradiene. The chain is Miltiradiene synthase KSL1, chloroplastic from Isodon rubescens (Rabdosia rubescens).